An 87-amino-acid polypeptide reads, in one-letter code: Cell division topological specificity factor (87 aa).

Belongs to the MinE family.

Functionally, prevents the cell division inhibition by proteins MinC and MinD at internal division sites while permitting inhibition at polar sites. This ensures cell division at the proper site by restricting the formation of a division septum at the midpoint of the long axis of the cell. The protein is Cell division topological specificity factor of Rhizobium meliloti (strain 1021) (Ensifer meliloti).